Consider the following 154-residue polypeptide: Probable chemoreceptor glutamine deamidase CheD (154 aa).

This sequence belongs to the CheD family.

The catalysed reaction is L-glutaminyl-[protein] + H2O = L-glutamyl-[protein] + NH4(+). Probably deamidates glutamine residues to glutamate on methyl-accepting chemotaxis receptors (MCPs), playing an important role in chemotaxis. The polypeptide is Probable chemoreceptor glutamine deamidase CheD (Methanococcus maripaludis (strain DSM 14266 / JCM 13030 / NBRC 101832 / S2 / LL)).